Here is a 325-residue protein sequence, read N- to C-terminus: Fe-S cluster assembly protein DRE2 (325 aa).

Residues 1 to 169 form an N-terminal SAM-like domain region; the sequence is MTLGDRLGLI…KKKDAGNNEQ (169 aa). The segment at 170–222 is linker; it reads VVKLSVEDVEDDLDDDPEVSNELLSKAKFFNSLSLNQDAEIDENNLIKSTDGD. Residues Cys-229, Cys-240, Cys-243, and Cys-245 each coordinate [2Fe-2S] cluster. The segment at 229-245 is fe-S binding site A; sequence CGKTNTKKRRACKDCTC. Residues Cys-288, Cys-291, Cys-299, and Cys-302 each coordinate [4Fe-4S] cluster. 2 consecutive short sequence motifs (cx2C motif) follow at residues 288–291 and 299–302; these read CGSC and CSGC. The segment at 288–302 is fe-S binding site B; sequence CGSCSLGDAFRCSGC.

This sequence belongs to the anamorsin family. Monomer. Interacts with TAH18. Interacts with MIA40. It depends on [2Fe-2S] cluster as a cofactor. The cofactor is [4Fe-4S] cluster.

Its subcellular location is the cytoplasm. It is found in the mitochondrion intermembrane space. Its function is as follows. Component of the cytosolic iron-sulfur (Fe-S) protein assembly (CIA) machinery required for the maturation of extramitochondrial Fe-S proteins. Part of an electron transfer chain functioning in an early step of cytosolic Fe-S biogenesis, facilitating the de novo assembly of a [4Fe-4S] cluster on the scaffold complex CFD1-NBP35. Electrons are transferred to DRE2 from NADPH via the FAD- and FMN-containing protein TAH18. TAH18-DRE2 are also required for the assembly of the diferric tyrosyl radical cofactor of ribonucleotide reductase (RNR), probably by providing electrons for reduction during radical cofactor maturation in the catalytic small subunit RNR2. The protein is Fe-S cluster assembly protein DRE2 of Vanderwaltozyma polyspora (strain ATCC 22028 / DSM 70294 / BCRC 21397 / CBS 2163 / NBRC 10782 / NRRL Y-8283 / UCD 57-17) (Kluyveromyces polysporus).